A 567-amino-acid polypeptide reads, in one-letter code: Geranylgeranyl transferase type-2 subunit alpha (567 aa).

PFTA repeat units lie at residues 44 to 78 (LDESVLELTSQILGANPDFATLWNCRREVLQQLET), 88 to 122 (LVKAELGFLESCLRVNPKSYGTWHHRCWLLSRLPE), 124 to 158 (NWARELELCARFLEADERNFHCWDYRRFVAAQAAV), 159 to 193 (APAEELAFTDSLITRNFSNYSSWHYRSCLLPQLHP), 207 to 241 (VLLRELELVQNAFFTDPNDQSAWFYHRWLLGRAEP), and 363 to 397 (VLQSELESCKELQELEPENKWCLLTIILLMRALDP). Ser-98 carries the post-translational modification Phosphoserine. LRR repeat units follow at residues 442 to 463 (DVRVLHLAHKDLTVLCHLEQLL), 464 to 486 (LVTHLDLSHNRLRALPPALAALR), 487 to 508 (CLEVLQASDNVLENLDGVANLP), 509 to 530 (RLRELLLCNNRLQQSAALQTLA), and 534 to 555 (RLVFLNLQGNSLCQEEGIRERL).

It belongs to the protein prenyltransferase subunit alpha family. In terms of assembly, heterotrimer composed of RABGGTA, RABGGTB and CHM; within this trimer, RABGGTA and RABGGTB form the catalytic component B, while CHM (component A) mediates peptide substrate binding. The Rab GGTase dimer (RGGT) interacts with CHM (component A) prior to Rab protein binding; the association is stabilized by geranylgeranyl pyrophosphate (GGpp). The CHM:RGGT:Rab complex is destabilized by GGpp. Interacts with non-phosphorylated form of RAB8A; phosphorylation of RAB8A at 'Thr-72' disrupts this interaction.

It catalyses the reaction geranylgeranyl diphosphate + L-cysteinyl-[protein] = S-geranylgeranyl-L-cysteinyl-[protein] + diphosphate. With respect to regulation, the enzymatic reaction requires the aid of a Rab escort protein (also called component A), such as CHM. Functionally, catalyzes the transfer of a geranylgeranyl moiety from geranylgeranyl diphosphate to both cysteines of Rab proteins with the C-terminal sequence -XXCC, -XCXC and -CCXX, such as RAB1A, RAB3A, RAB5A and RAB7A. This chain is Geranylgeranyl transferase type-2 subunit alpha (Rabggta), found in Mus musculus (Mouse).